The sequence spans 156 residues: Small ribosomal subunit protein uS7 (156 aa).

This sequence belongs to the universal ribosomal protein uS7 family. Part of the 30S ribosomal subunit. Contacts proteins S9 and S11.

Functionally, one of the primary rRNA binding proteins, it binds directly to 16S rRNA where it nucleates assembly of the head domain of the 30S subunit. Is located at the subunit interface close to the decoding center, probably blocks exit of the E-site tRNA. This is Small ribosomal subunit protein uS7 from Tolumonas auensis (strain DSM 9187 / NBRC 110442 / TA 4).